We begin with the raw amino-acid sequence, 158 residues long: C-type lectin TsL (158 aa).

The first 23 residues, 1-23, serve as a signal peptide directing secretion; the sequence is MGRFIFVSFGLLVVFLSLSGAKG. One can recognise a C-type lectin domain in the interval 24-158; that stretch reads SCCTNDSLPM…KNSFLCQCKF (135 aa). Intrachain disulfides connect cysteine 26–cysteine 37, cysteine 54–cysteine 154, cysteine 61–cysteine 156, and cysteine 129–cysteine 146. N-linked (GlcNAc...) (high mannose) asparagine glycosylation is present at asparagine 28. Ca(2+)-binding residues include glutamine 119, aspartate 121, glutamate 127, asparagine 142, and aspartate 143. Positions 119–121 match the Galactose-binding motif; that stretch reads QPD.

This sequence belongs to the true venom lectin family. In terms of assembly, homodimer; disulfide-linked. As to expression, expressed by the venom gland.

The protein resides in the secreted. In terms of biological role, galactose-binding protein which recognizes specific carbohydrate structures and agglutinates a variety of animal cells by binding to cell-surface glycoproteins and glycolipids. May be a calcium-dependent lectin. This Trimeresurus stejnegeri (Chinese green tree viper) protein is C-type lectin TsL.